Reading from the N-terminus, the 290-residue chain is Bifunctional protein FolD 1 (290 aa).

Residues 164 to 166 (GRS), isoleucine 193, and isoleucine 236 contribute to the NADP(+) site.

The protein belongs to the tetrahydrofolate dehydrogenase/cyclohydrolase family. Homodimer.

The catalysed reaction is (6R)-5,10-methylene-5,6,7,8-tetrahydrofolate + NADP(+) = (6R)-5,10-methenyltetrahydrofolate + NADPH. The enzyme catalyses (6R)-5,10-methenyltetrahydrofolate + H2O = (6R)-10-formyltetrahydrofolate + H(+). It participates in one-carbon metabolism; tetrahydrofolate interconversion. In terms of biological role, catalyzes the oxidation of 5,10-methylenetetrahydrofolate to 5,10-methenyltetrahydrofolate and then the hydrolysis of 5,10-methenyltetrahydrofolate to 10-formyltetrahydrofolate. This Geobacter metallireducens (strain ATCC 53774 / DSM 7210 / GS-15) protein is Bifunctional protein FolD 1.